Consider the following 479-residue polypeptide: Anaerobic nitric oxide reductase flavorubredoxin (479 aa).

The segment at Leu-30–Ile-210 is zinc metallo-hydrolase. His-79, Glu-81, Asp-83, His-147, Asp-166, and His-227 together coordinate Fe cation. In terms of domain architecture, Flavodoxin-like spans Ile-254–Ala-393. FMN is bound by residues Thr-260–Asn-264 and Ala-342–Leu-369. The 52-residue stretch at Gly-423–Leu-474 folds into the Rubredoxin-like domain. Positions 428, 431, 461, and 464 each coordinate Fe cation.

It in the N-terminal section; belongs to the zinc metallo-hydrolase group 3 family. As to quaternary structure, homotetramer. Requires Fe cation as cofactor. The cofactor is FMN.

The protein localises to the cytoplasm. The protein operates within nitrogen metabolism; nitric oxide reduction. In terms of biological role, anaerobic nitric oxide reductase; uses NADH to detoxify nitric oxide (NO), protecting several 4Fe-4S NO-sensitive enzymes. Has at least 2 reductase partners, only one of which (NorW, flavorubredoxin reductase) has been identified. NO probably binds to the di-iron center; electrons enter from the NorW at rubredoxin and are transferred sequentially to the FMN center and the di-iron center. Also able to function as an aerobic oxygen reductase. The protein is Anaerobic nitric oxide reductase flavorubredoxin of Shigella boydii serotype 4 (strain Sb227).